The primary structure comprises 346 residues: Holliday junction branch migration complex subunit RuvB (346 aa).

A large ATPase domain (RuvB-L) region spans residues 2–183; it reads TDDRIIGAGA…FGIVQRLEFY (182 aa). ATP-binding positions include isoleucine 22, arginine 23, glycine 64, lysine 67, threonine 68, threonine 69, 130 to 132, arginine 173, tyrosine 183, and arginine 220; that span reads EDF. Position 68 (threonine 68) interacts with Mg(2+). Positions 184–254 are small ATPAse domain (RuvB-S); that stretch reads SVEELTRIVR…VAQAAMKMLK (71 aa). The interval 257–346 is head domain (RuvB-H); sequence PEGFDELDRR…DLFAEVPDVG (90 aa). Positions 293, 312, and 317 each coordinate DNA.

This sequence belongs to the RuvB family. As to quaternary structure, homohexamer. Forms an RuvA(8)-RuvB(12)-Holliday junction (HJ) complex. HJ DNA is sandwiched between 2 RuvA tetramers; dsDNA enters through RuvA and exits via RuvB. An RuvB hexamer assembles on each DNA strand where it exits the tetramer. Each RuvB hexamer is contacted by two RuvA subunits (via domain III) on 2 adjacent RuvB subunits; this complex drives branch migration. In the full resolvosome a probable DNA-RuvA(4)-RuvB(12)-RuvC(2) complex forms which resolves the HJ.

It localises to the cytoplasm. The enzyme catalyses ATP + H2O = ADP + phosphate + H(+). The RuvA-RuvB-RuvC complex processes Holliday junction (HJ) DNA during genetic recombination and DNA repair, while the RuvA-RuvB complex plays an important role in the rescue of blocked DNA replication forks via replication fork reversal (RFR). RuvA specifically binds to HJ cruciform DNA, conferring on it an open structure. The RuvB hexamer acts as an ATP-dependent pump, pulling dsDNA into and through the RuvAB complex. RuvB forms 2 homohexamers on either side of HJ DNA bound by 1 or 2 RuvA tetramers; 4 subunits per hexamer contact DNA at a time. Coordinated motions by a converter formed by DNA-disengaged RuvB subunits stimulates ATP hydrolysis and nucleotide exchange. Immobilization of the converter enables RuvB to convert the ATP-contained energy into a lever motion, pulling 2 nucleotides of DNA out of the RuvA tetramer per ATP hydrolyzed, thus driving DNA branch migration. The RuvB motors rotate together with the DNA substrate, which together with the progressing nucleotide cycle form the mechanistic basis for DNA recombination by continuous HJ branch migration. Branch migration allows RuvC to scan DNA until it finds its consensus sequence, where it cleaves and resolves cruciform DNA. The polypeptide is Holliday junction branch migration complex subunit RuvB (Stenotrophomonas maltophilia (strain R551-3)).